Reading from the N-terminus, the 528-residue chain is Protein spinster homolog 1 (528 aa).

The segment at 1-44 (MSGSDTAPFLSQADDTDDGPAPGTPGLPGSMGNPKSEDPAVPDQ) is disordered. 12 helical membrane-spanning segments follow: residues 50–70 (ITGL…YINL), 98–118 (GLIQ…FGYL), 126–146 (YLMC…SFIP), 160–180 (VGVG…DLFV), 187–207 (MLSV…IAGS), 218–238 (WALR…FLVV), 278–298 (LGFT…PAFL), 323–343 (LIFG…GVEI), 357–377 (LVCA…LACA), 381–401 (IVAT…NWAI), 421–441 (FQIV…IGSI), and 465–485 (MLCA…AIFI). S518 bears the Phosphoserine mark.

This sequence belongs to the major facilitator superfamily. Spinster (TC 2.A.1.49) family. Interacts with BCL2 and BCL2L1.

It is found in the lysosome membrane. The enzyme catalyses a 1-acyl-sn-glycero-3-phosphocholine(out) + H(+)(out) = a 1-acyl-sn-glycero-3-phosphocholine(in) + H(+)(in). The catalysed reaction is 1-hexadecanoyl-sn-glycero-3-phosphocholine(out) + H(+)(out) = 1-hexadecanoyl-sn-glycero-3-phosphocholine(in) + H(+)(in). It carries out the reaction 1-(9Z-octadecenoyl)-sn-glycero-3-phosphocholine(out) + H(+)(out) = 1-(9Z-octadecenoyl)-sn-glycero-3-phosphocholine(in) + H(+)(in). It catalyses the reaction 1-(5Z,8Z,11Z,14Z-eicosatetraenoyl)-sn-glycero-3-phosphocholine(out) + H(+)(out) = 1-(5Z,8Z,11Z,14Z-eicosatetraenoyl)-sn-glycero-3-phosphocholine(in) + H(+)(in). The enzyme catalyses 1-(4Z,7Z,10Z,13Z,16Z,19Z-docosahexaenoyl)-sn-glycero-3-phosphocholine(out) + H(+)(out) = 1-(4Z,7Z,10Z,13Z,16Z,19Z-docosahexaenoyl)-sn-glycero-3-phosphocholine(in) + H(+)(in). The catalysed reaction is a 1-acyl-sn-glycero-3-phosphoethanolamine(out) + H(+)(out) = a 1-acyl-sn-glycero-3-phosphoethanolamine(in) + H(+)(in). It carries out the reaction 1-(9Z-octadecenoyl)-sn-glycero-3-phosphoethanolamine(out) + H(+)(out) = 1-(9Z-octadecenoyl)-sn-glycero-3-phosphoethanolamine(in) + H(+)(in). It catalyses the reaction 1-acyl-sn-glycero-3-phospho-(1'-sn-glycerol)(out) + H(+)(out) = 1-acyl-sn-glycero-3-phospho-(1'-sn-glycerol)(in) + H(+)(in). The enzyme catalyses 1-(9Z-octadecenoyl)-sn-glycero-3-phospho-(1'-sn-glycerol)(out) + H(+)(out) = 1-(9Z-octadecenoyl)-sn-glycero-3-phospho-(1'-sn-glycerol)(in) + H(+)(in). The catalysed reaction is a 1-O-(1Z-alkenyl)-sn-glycero-3-phosphocholine(out) + H(+)(out) = a 1-O-(1Z-alkenyl)-sn-glycero-3-phosphocholine(in) + H(+)(in). It carries out the reaction 1-(1Z-hexadecenyl)-sn-glycero-3-phosphocholine(out) + H(+)(out) = 1-(1Z-hexadecenyl)-sn-glycero-3-phosphocholine(in) + H(+)(in). It catalyses the reaction a 1-O-(1Z-alkenyl)-sn-glycero-3-phosphoethanolamine(out) + H(+)(out) = a 1-O-(1Z-alkenyl)-sn-glycero-3-phosphoethanolamine(in) + H(+)(in). The enzyme catalyses 1-O-(1Z-hexadecenyl)-sn-glycero-3-phosphoethanolamine(out) + H(+)(out) = 1-O-(1Z-hexadecenyl)-sn-glycero-3-phosphoethanolamine(in) + H(+)(in). Its function is as follows. Plays a critical role in the phospholipid salvage pathway from lysosomes to the cytosol. Mediates the rate-limiting, proton-dependent, lysosomal efflux of lysophospholipids, which can then be reacylated by acyltransferases in the endoplasmic reticulum to form phospholipids. Selective for zwitterionic headgroups such as lysophosphatidylcholine (LPC) and lysophosphatidylethanolamine (LPE), can also transport lysophosphatidylglycerol (LPG), but not other anionic lysophospholipids, sphingosine, nor sphingomyelin. Transports lysophospholipids with saturated, monounsaturated, and polyunsaturated fatty acids, such as 1-hexadecanoyl-sn-glycero-3-phosphocholine, 1-(9Z-octadecenoyl)-sn-glycero-3-phosphocholine and 1-(4Z,7Z,10Z,13Z,16Z,19Z-docosahexaenoyl)-sn-glycero-3-phosphocholine, respectively. Can also transport lysoplasmalogen (LPC with a fatty alcohol) such as 1-(1Z-hexadecenyl)-sn-glycero-3-phosphocholine. Essential player in lysosomal homeostasis. Crucial for cell survival under conditions of nutrient limitation. May be involved in necrotic or autophagic cell death. This chain is Protein spinster homolog 1 (SPNS1), found in Bos taurus (Bovine).